Consider the following 137-residue polypeptide: Ribosomal RNA small subunit methyltransferase G (137 aa).

S-adenosyl-L-methionine contacts are provided by residues Gly75, Phe80, and 126–127; that span reads AE.

This sequence belongs to the methyltransferase superfamily. RNA methyltransferase RsmG family.

The protein localises to the cytoplasm. Specifically methylates the N7 position of a guanine in 16S rRNA. This Mycoplasma mycoides subsp. mycoides SC (strain CCUG 32753 / NCTC 10114 / PG1) protein is Ribosomal RNA small subunit methyltransferase G.